Here is a 484-residue protein sequence, read N- to C-terminus: MKFKQDFFTQLPEFYSQVYPQGITKPEWLAWSDDAAQLIGLSQPTDELLLGLSGNAAVDGATYYAQVYSGHQFGGYTPRLGDGRSIILGEAIGPNGAWDVALKGGGPTPYSRRGDGRAVMRSAVREFLVSEALHHLHVPTTRALAVIGSDLPVWRESQETAAITVRLARSHIRFGHFEFFCHSERGRADKLIQLLNFTITQHYPHLSCDAAGYKAWFLQVVQDTAKMIAHWQAVGFAHGVMNTDNMSILGDSFDFGPFAFLDTFQEDFICNHSDPEGRYAFGQQPGIGLWNLQRLAQALTPVIPSDDLIAILNQYQEALVQPYLRLMRAKLGLSAVDVPSVEQDKQDLDLIGRFTVLMEKNQLDYTQTWRQLGKLDPTSKHSALRDDFIDVSQFDTWYQAYQQRLGAVADIPAWQTERNSVNPKYILRNYLAQEAIIAVEEGNLAPLHLLQKILTQPFAEHAEHEDLAKRPPDWGQGLIMSCSS.

ATP contacts are provided by Gly81, Gly83, Arg84, Lys103, Asp115, Gly116, Arg166, and Arg173. Asp244 acts as the Proton acceptor in catalysis. Mg(2+) contacts are provided by Asn245 and Asp254. Asp254 is a binding site for ATP.

The protein belongs to the SELO family. Mg(2+) is required as a cofactor. Mn(2+) serves as cofactor.

It carries out the reaction L-seryl-[protein] + ATP = 3-O-(5'-adenylyl)-L-seryl-[protein] + diphosphate. The catalysed reaction is L-threonyl-[protein] + ATP = 3-O-(5'-adenylyl)-L-threonyl-[protein] + diphosphate. The enzyme catalyses L-tyrosyl-[protein] + ATP = O-(5'-adenylyl)-L-tyrosyl-[protein] + diphosphate. It catalyses the reaction L-histidyl-[protein] + UTP = N(tele)-(5'-uridylyl)-L-histidyl-[protein] + diphosphate. It carries out the reaction L-seryl-[protein] + UTP = O-(5'-uridylyl)-L-seryl-[protein] + diphosphate. The catalysed reaction is L-tyrosyl-[protein] + UTP = O-(5'-uridylyl)-L-tyrosyl-[protein] + diphosphate. In terms of biological role, nucleotidyltransferase involved in the post-translational modification of proteins. It can catalyze the addition of adenosine monophosphate (AMP) or uridine monophosphate (UMP) to a protein, resulting in modifications known as AMPylation and UMPylation. The polypeptide is Protein nucleotidyltransferase YdiU (Shewanella baltica (strain OS155 / ATCC BAA-1091)).